Here is a 164-residue protein sequence, read N- to C-terminus: FMN reductase (NADH) RutF (164 aa).

This sequence belongs to the non-flavoprotein flavin reductase family. RutF subfamily.

The catalysed reaction is FMNH2 + NAD(+) = FMN + NADH + 2 H(+). Functionally, catalyzes the reduction of FMN to FMNH2 which is used to reduce pyrimidine by RutA via the Rut pathway. The protein is FMN reductase (NADH) RutF of Escherichia coli O127:H6 (strain E2348/69 / EPEC).